The primary structure comprises 393 residues: Elongation factor Tu (393 aa).

Residues 10-203 (KPHVNIGTIG…AVDDYIPEPV (194 aa)) enclose the tr-type G domain. Residues 19–26 (GHVDHGKT) form a G1 region. A GTP-binding site is contributed by 19–26 (GHVDHGKT). Threonine 26 contributes to the Mg(2+) binding site. The interval 60–64 (GITIS) is G2. The interval 81-84 (DCPG) is G3. GTP is bound by residues 81 to 85 (DCPGH) and 136 to 139 (NKVD). The segment at 136-139 (NKVD) is G4. The G5 stretch occupies residues 173–175 (SAL).

It belongs to the TRAFAC class translation factor GTPase superfamily. Classic translation factor GTPase family. EF-Tu/EF-1A subfamily. In terms of assembly, monomer.

It is found in the cytoplasm. The catalysed reaction is GTP + H2O = GDP + phosphate + H(+). GTP hydrolase that promotes the GTP-dependent binding of aminoacyl-tRNA to the A-site of ribosomes during protein biosynthesis. In Chlorobium phaeobacteroides (strain BS1), this protein is Elongation factor Tu.